Consider the following 205-residue polypeptide: D-alanine--D-alanine ligase (205 aa).

The ATP-grasp domain occupies Lys-111 to Phe-205. Met-139–Val-190 is a binding site for ATP.

Belongs to the D-alanine--D-alanine ligase family. Mg(2+) is required as a cofactor. Mn(2+) serves as cofactor.

The protein localises to the cytoplasm. It carries out the reaction 2 D-alanine + ATP = D-alanyl-D-alanine + ADP + phosphate + H(+). Its pathway is cell wall biogenesis; peptidoglycan biosynthesis. Its function is as follows. Cell wall formation. The sequence is that of D-alanine--D-alanine ligase (ddl) from Anaplasma centrale.